The primary structure comprises 581 residues: Colicin-E2 (581 aa).

5 disordered regions span residues 1 to 74 (MSGG…SGGG), 242 to 269 (QTLS…NTRD), 293 to 320 (PDQV…EAAE), 421 to 488 (ADAA…IADK), and 513 to 566 (DLSK…MNNI). Residues 20-35 (INGGPTGLGVGGGASD) are compositionally biased toward gly residues. Low complexity predominate over residues 36-45 (GSGWSSENNP). A compositionally biased stretch (gly residues) spans 46–74 (WGGGSGSGIHWGGGSGHGNGGGNGNSGGG). Polar residues predominate over residues 242-251 (QTLSPGVTNN). Composition is skewed to basic and acidic residues over residues 296 to 320 (VKQR…EAAE), 429 to 452 (QERR…ESKR), and 464 to 475 (PVGDKWLDDAGK). Positions 518-527 (FKGSNKTNIQ) are enriched in polar residues. Basic and acidic residues predominate over residues 535 to 554 (RKKDQVGGRERFELHHDKPI). Residues His-549, His-574, and His-578 each contribute to the Zn(2+) site.

The protein belongs to the colicin/pyosin nuclease family.

This plasmid-coded bactericidal protein is an endonuclease active on both single- and double-stranded DNA but with undefined specificity. In terms of biological role, colicins are polypeptide toxins produced by and active against E.coli and closely related bacteria. The chain is Colicin-E2 (col) from Escherichia coli.